A 292-amino-acid polypeptide reads, in one-letter code: ATP synthase gamma chain (292 aa).

It belongs to the ATPase gamma chain family. F-type ATPases have 2 components, CF(1) - the catalytic core - and CF(0) - the membrane proton channel. CF(1) has five subunits: alpha(3), beta(3), gamma(1), delta(1), epsilon(1). CF(0) has three main subunits: a, b and c.

It is found in the cell inner membrane. Produces ATP from ADP in the presence of a proton gradient across the membrane. The gamma chain is believed to be important in regulating ATPase activity and the flow of protons through the CF(0) complex. In Brucella abortus (strain S19), this protein is ATP synthase gamma chain.